Reading from the N-terminus, the 141-residue chain is MAMTVHCDIVSAEGEIFSGLVEMVIAHGNLGDIGIAPGHAPLITDLKPGPIRLIKQGGEAEVFYISGGFLEVQPNMVKVLADTVQRAADLDEASAQAAVLAAEKALNEKGADFDYGSATARLAEAAAQLRTVQQIRKKFGG.

It belongs to the ATPase epsilon chain family. As to quaternary structure, F-type ATPases have 2 components, CF(1) - the catalytic core - and CF(0) - the membrane proton channel. CF(1) has five subunits: alpha(3), beta(3), gamma(1), delta(1), epsilon(1). CF(0) has three main subunits: a, b and c.

The protein resides in the cell inner membrane. Functionally, produces ATP from ADP in the presence of a proton gradient across the membrane. This Pseudomonas syringae pv. syringae (strain B728a) protein is ATP synthase epsilon chain.